A 602-amino-acid chain; its full sequence is Lysine--tRNA ligase, chloroplastic/mitochondrial (602 aa).

Residues 50–62 (SSSSSSATTAETS) show a composition bias toward low complexity. Positions 50 to 83 (SSSSSSATTAETSKPSGRNRRSASSSNSTSDREA) are disordered. Positions 136–214 (VSIAGRVVAR…SICVNSFSIL (79 aa)) form a DNA-binding region, OB. 2 residues coordinate substrate: glycine 285 and glutamate 309. ATP contacts are provided by residues 331–333 (RNE) and 339–340 (HN). Residues glutamate 347 and tyrosine 349 each coordinate substrate. Ca(2+) is bound by residues glutamate 492 and glutamate 499. 499–500 (EM) contributes to the ATP binding site. Residues asparagine 502 and glutamate 506 each coordinate substrate. Residues 524–543 (HNAKRAEAVRESPEPNAKKD) are compositionally biased toward basic and acidic residues. The tract at residues 524–550 (HNAKRAEAVRESPEPNAKKDDDDDESY) is disordered. 575-578 (GIDR) lines the ATP pocket.

This sequence belongs to the class-II aminoacyl-tRNA synthetase family. Requires Ca(2+) as cofactor.

It localises to the plastid. The protein resides in the chloroplast. It is found in the mitochondrion. It catalyses the reaction tRNA(Lys) + L-lysine + ATP = L-lysyl-tRNA(Lys) + AMP + diphosphate. Catalyzes the specific attachment of an amino acid to its cognate tRNA in a 2 step reaction: the amino acid (AA) is first activated by ATP to form AA-AMP and then transferred to the acceptor end of the tRNA. This Arabidopsis thaliana (Mouse-ear cress) protein is Lysine--tRNA ligase, chloroplastic/mitochondrial.